A 209-amino-acid polypeptide reads, in one-letter code: C-type lectin domain family 6 member A (209 aa).

At 1–20 the chain is on the cytoplasmic side; sequence MVQERQSQGKGVCWTLRLWS. The helical; Signal-anchor for type II membrane protein transmembrane segment at 21–43 threads the bilayer; the sequence is AAVISMLLLSTCFIASCVVTYQF. The Extracellular segment spans residues 44–209; it reads IMDQPSRRLY…SICEMKKIYL (166 aa). Cystine bridges form between Cys-64–Cys-78, Cys-79–Cys-90, Cys-107–Cys-202, and Cys-176–Cys-194. A C-type lectin domain is found at 86–203; sequence FGSSCYLIST…CDSKHNSICE (118 aa). Ca(2+)-binding residues include Val-116, Asn-118, and Glu-122. Asn-131 is a glycosylation site (N-linked (GlcNAc...) asparagine). Residues Glu-168, Asn-170, and Glu-174 each contribute to the Ca(2+) site. Alpha-D-mannopyranose contacts are provided by residues 168-170, Glu-174, Trp-182, and 190-191; these read EPN and ND. Residues Asn-190, Asp-191, and Glu-203 each contribute to the Ca(2+) site.

In terms of assembly, associated with FCER1G. Heterodimer with CLEC4D; this heterodimer forms a pattern recognition receptor (PRR) against fungal infection. As to expression, expressed by the XS52 DC (dendritic cell) line (at protein level). Expressed constitutively by the epidermis, and skin resident DC appear to be the major source of this expression. Expressed in the spleen and thymus. Expression was undetectable in non-DC lines, including macrophage lines (J774 and Raw), T-cell lines (7-17, HDK-1, and D10), B-cell hybridoma (5C5), a keratinocyte line (Pam 212), and a fibroblast line (NS01).

It localises to the cell membrane. Its function is as follows. Calcium-dependent lectin that acts as a pattern recognition receptor (PRR) of the innate immune system: specifically recognizes and binds alpha-mannans on C.albicans hypheas. Binding of C.albicans alpha-mannans to this receptor complex leads to phosphorylation of the immunoreceptor tyrosine-based activation motif (ITAM) of FCER1G, triggering activation of SYK, CARD9 and NF-kappa-B, consequently driving maturation of antigen-presenting cells and shaping antigen-specific priming of T-cells toward effector T-helper 1 and T-helper 17 cell subtypes. Also recognizes, in a mannose-dependent manner, allergens from house dust mite and fungi, by promoting cysteinyl leukotriene production. Recognizes soluble elements from the eggs of Shistosoma mansoni altering adaptive immune responses. The polypeptide is C-type lectin domain family 6 member A (Mus musculus (Mouse)).